Here is a 137-residue protein sequence, read N- to C-terminus: Large ribosomal subunit protein eL28 (137 aa).

The residue at position 2 (Ser-2) is an N-acetylserine. Glycyl lysine isopeptide (Lys-Gly) (interchain with G-Cter in SUMO2) cross-links involve residues Lys-58 and Lys-65. At Ser-115 the chain carries Phosphoserine.

This sequence belongs to the eukaryotic ribosomal protein eL28 family. Component of the large ribosomal subunit.

It localises to the cytoplasm. Functionally, component of the large ribosomal subunit. The ribosome is a large ribonucleoprotein complex responsible for the synthesis of proteins in the cell. The sequence is that of Large ribosomal subunit protein eL28 (RPL28) from Homo sapiens (Human).